Reading from the N-terminus, the 366-residue chain is Short-chain collagen C4 (366 aa).

Residues 1–14 show a composition bias toward low complexity; that stretch reads DTGPQGPQGVAGPP. Triple-helical region stretches follow at residues 1–23 and 40–210; these read DTGP…KGDK and GPPG…NGAV. Residues 1–207 form a disordered region; sequence DTGPQGPQGV…QGPQGAPGSN (207 aa). The span at 28–45 shows a compositional bias: pro residues; the sequence is YPPPPTCPTCPAGPPGAP. 2 stretches are compositionally biased toward low complexity: residues 75-90 and 99-110; these read PGND…PGYD and TGAPGPQGPKGD. Residues 138–149 show a composition bias toward basic and acidic residues; the sequence is DGQDGAKGDKGD. 2 stretches are compositionally biased toward low complexity: residues 150 to 168 and 189 to 201; these read QGPA…QGPA and QGPK…QGPQ.

It localises to the secreted. The protein resides in the extracellular space. The protein localises to the extracellular matrix. The polypeptide is Short-chain collagen C4 (Ephydatia muelleri (Mueller's freshwater sponge)).